We begin with the raw amino-acid sequence, 92 residues long: Small ribosomal subunit protein uS19 (92 aa).

This sequence belongs to the universal ribosomal protein uS19 family.

Functionally, protein S19 forms a complex with S13 that binds strongly to the 16S ribosomal RNA. In Rhizobium johnstonii (strain DSM 114642 / LMG 32736 / 3841) (Rhizobium leguminosarum bv. viciae), this protein is Small ribosomal subunit protein uS19.